We begin with the raw amino-acid sequence, 381 residues long: ADP,ATP carrier protein 1, mitochondrial (381 aa).

A mitochondrion-targeting transit peptide spans 1-70 (MVDQVQHPTI…ATTASPVFVQ (70 aa)). 3 Solcar repeats span residues 78–171 (TNFA…FKRL), 183–276 (KWFA…VKPV), and 284–370 (DSFF…LQLI). 5 helical membrane passes run 80–107 (FALD…VKLL), 148–172 (TANV…KRLF), 181–201 (YWKW…SSLL), 252–273 (FNIS…YDSV), and 287–307 (FASF…SYPI). ADP is bound by residues R153 and K165. R311 lines the ADP pocket. The tract at residues 311 to 316 (RRRMMM) is important for transport activity. The Nucleotide carrier signature motif signature appears at 311–316 (RRRMMM). A helical transmembrane segment spans residues 347-367 (AGANILRAVAGAGVLSGYDKL).

Belongs to the mitochondrial carrier (TC 2.A.29) family. In terms of assembly, monomer.

It localises to the mitochondrion inner membrane. It carries out the reaction ADP(in) + ATP(out) = ADP(out) + ATP(in). Its activity is regulated as follows. The matrix-open state (m-state) is inhibited by the membrane-permeable bongkrekic acid (BKA). The cytoplasmic-open state (c-state) is inhibited by the membrane-impermeable toxic inhibitor carboxyatractyloside (CATR). ADP:ATP antiporter that mediates import of ADP into the mitochondrial matrix for ATP synthesis, and export of ATP out to fuel the cell. Cycles between the cytoplasmic-open state (c-state) and the matrix-open state (m-state): operates by the alternating access mechanism with a single substrate-binding site intermittently exposed to either the cytosolic (c-state) or matrix (m-state) side of the inner mitochondrial membrane. The chain is ADP,ATP carrier protein 1, mitochondrial (AAC1) from Arabidopsis thaliana (Mouse-ear cress).